The following is a 328-amino-acid chain: MYTLHTKRVKAAAREMWTSNVSKVRQSFKNVYHKCKIRHQDSTRYPTVTSDDCNQDDVSYDGKMNLTVVLQDVKTAQVELFSQMTDIVHAIPKVHEKTDLYQKQMEVLETRMNVNEDKQGTTTKDILSMKEDIKALKKKVTELEKQNSYSRIHCLEIPEGERGEEITELLYKLIQPATLKNTLASTDREMSSAEPEKVPSYPKSTDHLEKITISPQIKTLKKRNHQNASRNFKIAKPNIYIYPDFSTWIKLTFVHGGKWTFFLSATKLEEFIQWLLSRPTILPEEPQVITQRYCPFTGLILSLTTICLSMFNNIYGFIRSLKEEVTRL.

Residues T122–R151 adopt a coiled-coil conformation. Position 182 is a phosphothreonine (T182). A compositionally biased stretch (basic and acidic residues) spans T186–K197. A disordered region spans residues T186–T205.

This Macaca fascicularis (Crab-eating macaque) protein is Coiled-coil domain-containing protein 54 (CCDC54).